The chain runs to 109 residues: Protein reprimo (109 aa).

Residues N7 and N18 are each glycosylated (N-linked (GlcNAc...) asparagine). The chain crosses the membrane as a helical span at residues 56 to 76; it reads VVQIAVMCVLSLTVVFGIFFL. Position 98 is a phosphoserine (S98).

The protein belongs to the reprimo family.

It is found in the cytoplasm. The protein resides in the membrane. Functionally, may be involved in the regulation of p53-dependent G2 arrest of the cell cycle. Seems to induce cell cycle arrest by inhibiting CDK1 activity and nuclear translocation of the CDC2 cyclin B1 complex. The polypeptide is Protein reprimo (RPRM) (Homo sapiens (Human)).